The following is a 292-amino-acid chain: ATP synthase gamma chain (292 aa).

The protein belongs to the ATPase gamma chain family. In terms of assembly, F-type ATPases have 2 components, CF(1) - the catalytic core - and CF(0) - the membrane proton channel. CF(1) has five subunits: alpha(3), beta(3), gamma(1), delta(1), epsilon(1). CF(0) has three main subunits: a, b and c.

Its subcellular location is the cell membrane. In terms of biological role, produces ATP from ADP in the presence of a proton gradient across the membrane. The gamma chain is believed to be important in regulating ATPase activity and the flow of protons through the CF(0) complex. The chain is ATP synthase gamma chain from Streptococcus thermophilus (strain CNRZ 1066).